A 122-amino-acid polypeptide reads, in one-letter code: UPF0102 protein NGR_c36770 (122 aa).

This sequence belongs to the UPF0102 family.

This is UPF0102 protein NGR_c36770 from Sinorhizobium fredii (strain NBRC 101917 / NGR234).